The following is a 321-amino-acid chain: Carbonic anhydrase, chloroplastic (321 aa).

The N-terminal 100 residues, 1–100, are a transit peptide targeting the chloroplast; the sequence is MSTASINSCL…AAARVDQITA (100 aa).

This sequence belongs to the beta-class carbonic anhydrase family. In terms of assembly, homohexamer.

It is found in the plastid. The protein localises to the chloroplast stroma. It catalyses the reaction hydrogencarbonate + H(+) = CO2 + H2O. In terms of biological role, reversible hydration of carbon dioxide. In Nicotiana tabacum (Common tobacco), this protein is Carbonic anhydrase, chloroplastic.